The chain runs to 240 residues: Izumo sperm-egg fusion protein 3 (240 aa).

The N-terminal stretch at 1–22 is a signal peptide; sequence MGDLWLLLLLPLSLAAFHGVKG. The Extracellular portion of the chain corresponds to 23-176; that stretch reads CLECDPKFIE…DDPKKAESRE (154 aa). Residues 177–197 form a helical membrane-spanning segment; it reads IGLFLILLAEGVILGGVLLLF. The Cytoplasmic segment spans residues 198–240; it reads HFCISHQRKMKAIRRSLKTYLEKKLEELMGIKDEKEKDFRGRE.

The protein belongs to the Izumo family. In terms of assembly, monomer and homodimer.

It localises to the cell membrane. This is Izumo sperm-egg fusion protein 3 (IZUMO3) from Bos taurus (Bovine).